A 311-amino-acid polypeptide reads, in one-letter code: uncharacterized protein (311 aa).

Residues 1–13 (MLLSLIFPIAVLG) form the signal peptide. A glycan (N-linked (GlcNAc...) asparagine) is linked at N115.

Its subcellular location is the secreted. This is an uncharacterized protein from Encephalitozoon cuniculi (strain GB-M1) (Microsporidian parasite).